The primary structure comprises 185 residues: Intraflagellar transport protein 22 homolog (185 aa).

GTP-binding positions include 10 to 17, 63 to 67, and 123 to 126; these read GPCESGKT, DCGGD, and HKPG. Serine 137 carries the phosphoserine modification.

The protein belongs to the small GTPase superfamily. Rab family. As to quaternary structure, component of the IFT complex B, at least composed of IFT20, IFT22, IFT25, IFT27, IFT46, IFT52, TRAF3IP1/IFT54, IFT57, IFT74, IFT80, IFT81, and IFT88. Interacts with IFT88. Interacts with CFAP61.

It localises to the cell projection. The protein localises to the cilium. Small GTPase-like component of the intraflagellar transport (IFT) complex B. This is Intraflagellar transport protein 22 homolog (Ift22) from Mus musculus (Mouse).